The chain runs to 754 residues: 5-methyltetrahydropteroyltriglutamate--homocysteine methyltransferase (754 aa).

5-methyltetrahydropteroyltri-L-glutamate-binding positions include 17 to 20 (RELK) and lysine 117. L-homocysteine-binding positions include 431 to 433 (IGS) and glutamate 484. L-methionine contacts are provided by residues 431–433 (IGS) and glutamate 484. 5-methyltetrahydropteroyltri-L-glutamate contacts are provided by residues 515-516 (RC) and tryptophan 561. L-homocysteine is bound at residue aspartate 599. Aspartate 599 provides a ligand contact to L-methionine. Residue glutamate 605 participates in 5-methyltetrahydropteroyltri-L-glutamate binding. Zn(2+) is bound by residues histidine 641, cysteine 643, and glutamate 665. The active-site Proton donor is the histidine 694. Cysteine 726 lines the Zn(2+) pocket.

Belongs to the vitamin-B12 independent methionine synthase family. Zn(2+) is required as a cofactor.

It catalyses the reaction 5-methyltetrahydropteroyltri-L-glutamate + L-homocysteine = tetrahydropteroyltri-L-glutamate + L-methionine. Its pathway is amino-acid biosynthesis; L-methionine biosynthesis via de novo pathway; L-methionine from L-homocysteine (MetE route): step 1/1. Catalyzes the transfer of a methyl group from 5-methyltetrahydrofolate to homocysteine resulting in methionine formation. The protein is 5-methyltetrahydropteroyltriglutamate--homocysteine methyltransferase of Salmonella newport (strain SL254).